Consider the following 358-residue polypeptide: Src kinase-associated phosphoprotein 2 (358 aa).

Residues serine 5 and serine 6 each carry the phosphoserine modification. The segment at 62 to 88 (ESQDKGDAEDGEEYDDPFAGPPDTISL) is disordered. The residue at position 75 (tyrosine 75) is a Phosphotyrosine. Serine 87 and serine 90 each carry phosphoserine. One can recognise a PH domain in the interval 116–219 (FVLKAGYLEK…WVQQLNFVLQ (104 aa)). 2 positions are modified to phosphotyrosine: tyrosine 151 and tyrosine 197. Serine 223 carries the post-translational modification Phosphoserine. The segment at 232 to 254 (ERGELYDDVDHPLPSSSPTRSLP) is disordered. Low complexity predominate over residues 243-253 (PLPSSSPTRSL). Tyrosine 260 bears the Phosphotyrosine mark. Serine 282 and serine 285 each carry phosphoserine. The SH3 domain maps to 296-357 (NYANFYQGLW…PKAYVMEMYD (62 aa)).

The protein belongs to the SKAP family. In terms of assembly, interacts with FYB1, which is required for SKAP2 protein stability. Interacts with PTPNS1. Part of a complex consisting of SKAP2, FYB1 and PTPNS1. Part of a complex consisting of SKAP2, FYB1 and LILRB3. Interacts with LAT, GRB2, PTK2B and PRAM1. May interact with actin. May interact with FYN, HCK and LYN. Interacts with FASLG.

The protein resides in the cytoplasm. In terms of biological role, may be involved in B-cell and macrophage adhesion processes. In B-cells, may act by coupling the B-cell receptor (BCR) to integrin activation. May play a role in src signaling pathway. The polypeptide is Src kinase-associated phosphoprotein 2 (SKAP2) (Bos taurus (Bovine)).